The primary structure comprises 338 residues: Phenylalanine--tRNA ligase alpha subunit (338 aa).

Position 253 (E253) interacts with Mg(2+).

The protein belongs to the class-II aminoacyl-tRNA synthetase family. Phe-tRNA synthetase alpha subunit type 1 subfamily. As to quaternary structure, tetramer of two alpha and two beta subunits. Requires Mg(2+) as cofactor.

The protein localises to the cytoplasm. The catalysed reaction is tRNA(Phe) + L-phenylalanine + ATP = L-phenylalanyl-tRNA(Phe) + AMP + diphosphate + H(+). This Pelobacter propionicus (strain DSM 2379 / NBRC 103807 / OttBd1) protein is Phenylalanine--tRNA ligase alpha subunit.